The sequence spans 161 residues: MEEGELKDTDHLIDIQLDEVTFVRRRPEVEHERAVAIFDLLEDNHFGIKGFQGPFRLVLSLAENRLLFDIRDGEDKPLRKVILSLRPFRMIVKDYFMICESYFSAIRSMTPAQIEAIDMGRRGLHNEGGAVLKERLAGKVVVDHDTARRLFTLICVLHARG.

Belongs to the UPF0262 family.

The polypeptide is UPF0262 protein Rru_A2770 (Rhodospirillum rubrum (strain ATCC 11170 / ATH 1.1.1 / DSM 467 / LMG 4362 / NCIMB 8255 / S1)).